A 437-amino-acid polypeptide reads, in one-letter code: GTPase Obg (437 aa).

The Obg domain maps to 2-160; the sequence is SMFLDTAKIK…RNLELELKVL (159 aa). In terms of domain architecture, OBG-type G spans 161–338; sequence ADVGLVGFPS…LLEATAELLE (178 aa). GTP is bound by residues 167 to 174, 192 to 196, 214 to 217, 284 to 287, and 319 to 321; these read GFPSVGKS, FTTIV, DLPG, NKMD, and SGI. 2 residues coordinate Mg(2+): Ser174 and Thr194. The OCT domain occupies 359–437; it reads GFNPDEPEFA…IGKFEFEFVD (79 aa).

This sequence belongs to the TRAFAC class OBG-HflX-like GTPase superfamily. OBG GTPase family. Monomer. It depends on Mg(2+) as a cofactor.

The protein localises to the cytoplasm. Its function is as follows. An essential GTPase which binds GTP, GDP and possibly (p)ppGpp with moderate affinity, with high nucleotide exchange rates and a fairly low GTP hydrolysis rate. Plays a role in control of the cell cycle, stress response, ribosome biogenesis and in those bacteria that undergo differentiation, in morphogenesis control. The protein is GTPase Obg of Streptococcus suis (strain 05ZYH33).